Reading from the N-terminus, the 636-residue chain is Transcription termination factor FttA (636 aa).

A KHa region spans residues 4–72 (ELELKRIRDE…VVFRWNVDKR (69 aa)). Positions 73-140 (KDPAETKDYI…WQPKTIRTPP (68 aa)) are KHb. The tract at residues 181-383 (NIRMNALGGF…LLIEATYGGP (203 aa)) is metallo-beta-lactamase N-terminus. 6 residues coordinate Zn(2+): histidine 242, histidine 244, aspartate 246, histidine 247, histidine 329, and aspartate 352. The segment at 384 to 577 (QDRIPSRQES…LKVFTLEGFS (194 aa)) is beta-Casp. The metallo-beta-lactamase C-terminus stretch occupies residues 578-636 (GHSSRSQISQFLRRIQPRPKVVIVNHGEESKCVSLSTMIHKKLRKSTKSPKNLEVVLLK). Zn(2+) is bound at residue histidine 603.

It belongs to the metallo-beta-lactamase superfamily. RNA-metabolizing metallo-beta-lactamase-like family. FttA subfamily. Homodimer. Interacts with RNA polymerase (RNAP), interacts with the Spt4-Spt5 complex. Zn(2+) serves as cofactor.

Functionally, terminates transcription on the whole genome. Termination is linked to FttA-mediated RNA cleavage and does not require NTP hydrolysis. Cleaves endonucleolytically at the RNA exit channel of RNA polymerase (RNAP); the 5'-3' exonuclease activity of this protein degrades the nascent RNA released from RNAP. Its function is as follows. Terminates transcription genome-wide in M.maripaludis. Restores wild-type growth to a strain of Methanococcus maripaludis depleted for this gene at 22 degrees Celsius and prevents transcriptional read-through. Transcription termination is most effective in vivo on RNAs with more than one U4-tract in their 3'-ends. Has endonuclease activity after U-rich tracts in transcription termination sequences. The chain is Transcription termination factor FttA from Lokiarchaeum sp. (strain GC14_75).